Reading from the N-terminus, the 494-residue chain is Probable malate:quinone oxidoreductase (494 aa).

The protein belongs to the MQO family. FAD is required as a cofactor.

It carries out the reaction (S)-malate + a quinone = a quinol + oxaloacetate. It participates in carbohydrate metabolism; tricarboxylic acid cycle; oxaloacetate from (S)-malate (quinone route): step 1/1. In Kocuria rhizophila (strain ATCC 9341 / DSM 348 / NBRC 103217 / DC2201), this protein is Probable malate:quinone oxidoreductase.